Reading from the N-terminus, the 574-residue chain is Sulfate adenylyltransferase (574 aa).

The segment at 1 to 169 is N-terminal; it reads MANTPHGGVL…IEAVNKLNHY (169 aa). Residues 170-394 form a catalytic region; the sequence is DYVALRYTPA…LRESNPPRAS (225 aa). Residue Q197 participates in sulfate binding. Residues 197–200 and 291–294 contribute to the ATP site; these read QTRN and GRDH. Active-site residues include T198, R199, and N200. R199 serves as a coordination point for sulfate. Sulfate is bound at residue A295. V333 serves as a coordination point for ATP. The tract at residues 395–574 is allosteric regulation domain; adenylyl-sulfate kinase-like; it reads QGFTIFLTGY…LESEGYFERL (180 aa). 3'-phosphoadenylyl sulfate contacts are provided by residues 434 to 437, R451, 477 to 478, and R516; these read DTVR and IA.

It in the N-terminal section; belongs to the sulfate adenylyltransferase family. The protein in the C-terminal section; belongs to the APS kinase family. In terms of assembly, homohexamer. Dimer of trimers.

Its subcellular location is the cytoplasm. It catalyses the reaction sulfate + ATP + H(+) = adenosine 5'-phosphosulfate + diphosphate. It participates in sulfur metabolism; hydrogen sulfide biosynthesis; sulfite from sulfate: step 1/3. Its activity is regulated as follows. Allosterically inhibited by 3'-phosphoadenosine 5'-phosphosulfate (PAPS). Its function is as follows. Catalyzes the first intracellular reaction of sulfate assimilation, forming adenosine-5'-phosphosulfate (APS) from inorganic sulfate and ATP. Plays an important role in sulfate activation as a component of the biosynthesis pathway of sulfur-containing amino acids. This Aspergillus niger protein is Sulfate adenylyltransferase.